The primary structure comprises 733 residues: Vinexin (733 aa).

4 disordered regions span residues 1 to 51 (MARI…SNLD), 129 to 165 (TWPG…RQDK), 224 to 285 (SARA…NQVP), and 352 to 448 (ETRL…KRKA). Over residues 32–42 (DPNRVHTKEQL) the composition is skewed to basic and acidic residues. The span at 147–157 (QHAQNWSATWT) shows a compositional bias: polar residues. Residues 164 to 232 (DKRWVKYEGI…VSARASSAEP (69 aa)) enclose the SoHo domain. Polar residues-rich tracts occupy residues 245-256 (PGTTETSSGRNW) and 264-277 (RNTF…SSSG). Phosphoserine is present on residues Ser-412 and Ser-459. SH3 domains follow at residues 444-503 (KKRK…VLPA) and 518-579 (LEYG…INRE). Positions 444–579 (KKRKAARLKF…PASYVQINRE (136 aa)) are binds to vinculin. Positions 584 to 672 (LCDDGPQLPA…INLGPSSPNT (89 aa)) are disordered. Ser-594 bears the Phosphoserine; by MAPK1 mark. Over residues 597–613 (PTTTAHLSSHSHPSSIP) the composition is skewed to low complexity. Phosphoserine occurs at positions 607, 610, and 624. The span at 638-651 (EPRSQTQSLNTPGP) shows a compositional bias: polar residues. The 60-residue stretch at 674–733 (IHWTPYRAMYQYRPQNEDELELREGDRVDVMQQCDDGWFVGVSRRTQKFGTFPGNYVAPV) folds into the SH3 3 domain. Residues 674-733 (IHWTPYRAMYQYRPQNEDELELREGDRVDVMQQCDDGWFVGVSRRTQKFGTFPGNYVAPV) are binds to SOS.

Interacts with vinculin by the first two SH3 domains and the proline rich region of vinculin. Binds to SOS (guanine nucleotide exchange factor of RAS and RAC), through its third SH3 domain. The formation of this complex is down-regulated by phosphorylation of SOS. Interacts with SAFB2, INPPL1/SHIP2 and SRCIN1. Interacts with DLG5 through its third SH3 domain. Interacts with SOCS7 and MAPK1/ERK2. Interacts with FASLG. Post-translationally, phosphorylated at Ser-594 by MAPK1/ERK2 during cell spreading.

The protein localises to the cell junction. It is found in the focal adhesion. It localises to the cytoplasm. Its subcellular location is the cytoskeleton. Its function is as follows. Promotes up-regulation of actin stress fiber formation. The sequence is that of Vinexin (Sorbs3) from Mus musculus (Mouse).